The primary structure comprises 454 residues: UPF0210 protein Memar_2269 (454 aa).

Belongs to the UPF0210 family.

The sequence is that of UPF0210 protein Memar_2269 from Methanoculleus marisnigri (strain ATCC 35101 / DSM 1498 / JR1).